A 513-amino-acid chain; its full sequence is 2-isopropylmalate synthase (513 aa).

In terms of domain architecture, Pyruvate carboxyltransferase spans 5–268 (LIIFDTTLRD…DLRVDTSQIV (264 aa)). Mn(2+) contacts are provided by Asp14, His202, His204, and Asn239. A regulatory domain region spans residues 394-513 (RLLALSQHSE…SKAERVAAQG (120 aa)).

This sequence belongs to the alpha-IPM synthase/homocitrate synthase family. LeuA type 1 subfamily. Homodimer. Mn(2+) is required as a cofactor.

The protein localises to the cytoplasm. The catalysed reaction is 3-methyl-2-oxobutanoate + acetyl-CoA + H2O = (2S)-2-isopropylmalate + CoA + H(+). It participates in amino-acid biosynthesis; L-leucine biosynthesis; L-leucine from 3-methyl-2-oxobutanoate: step 1/4. Functionally, catalyzes the condensation of the acetyl group of acetyl-CoA with 3-methyl-2-oxobutanoate (2-ketoisovalerate) to form 3-carboxy-3-hydroxy-4-methylpentanoate (2-isopropylmalate). The sequence is that of 2-isopropylmalate synthase from Leptothrix cholodnii (strain ATCC 51168 / LMG 8142 / SP-6) (Leptothrix discophora (strain SP-6)).